Consider the following 283-residue polypeptide: Thymidylate synthase (283 aa).

Arginine 22 is a dUMP binding site. Catalysis depends on cysteine 160, which acts as the Nucleophile. DUMP is bound by residues 180–183 (RSCD), asparagine 191, and 221–223 (HIY). Residue aspartate 183 participates in (6R)-5,10-methylene-5,6,7,8-tetrahydrofolate binding. Serine 282 serves as a coordination point for (6R)-5,10-methylene-5,6,7,8-tetrahydrofolate.

The protein belongs to the thymidylate synthase family. Bacterial-type ThyA subfamily. In terms of assembly, homodimer.

It localises to the cytoplasm. The enzyme catalyses dUMP + (6R)-5,10-methylene-5,6,7,8-tetrahydrofolate = 7,8-dihydrofolate + dTMP. It functions in the pathway pyrimidine metabolism; dTTP biosynthesis. Its function is as follows. Catalyzes the reductive methylation of 2'-deoxyuridine-5'-monophosphate (dUMP) to 2'-deoxythymidine-5'-monophosphate (dTMP) while utilizing 5,10-methylenetetrahydrofolate (mTHF) as the methyl donor and reductant in the reaction, yielding dihydrofolate (DHF) as a by-product. This enzymatic reaction provides an intracellular de novo source of dTMP, an essential precursor for DNA biosynthesis. This chain is Thymidylate synthase, found in Vibrio parahaemolyticus serotype O3:K6 (strain RIMD 2210633).